A 987-amino-acid chain; its full sequence is Collagen alpha-1(I) chain (987 aa).

The span at 1 to 21 (SVPGPMGPSGPRGLPGPPGPG) shows a compositional bias: pro residues. Positions 1–987 (SVPGPMGPSG…PGPPGPPGPP (987 aa)) are disordered. 11 positions are modified to 4-hydroxyproline: P15, P18, P20, P29, P32, P35, P50, P65, P71, P80, and P86. Positions 23–41 (QGFQGPPGEPGEPGSSGPM) are enriched in low complexity. The segment covering 53 to 67 (NGDDGEAGKPGRPGE) has biased composition (basic and acidic residues). K89 bears the 5-hydroxylysine; alternate mark. The O-linked (Gal...) hydroxylysine; alternate glycan is linked to K89. Phosphoserine is present on S95. A compositionally biased stretch (low complexity) spans 103-119 (DAGPAGPKGEPGSPGEN). A 4-hydroxyproline mark is found at P113, P116, P122, P131, P137, P158, P167, P170, P197, P200, P212, P218, P227, P233, P236, and P251. A compositionally biased stretch (low complexity) spans 137 to 155 (PGASGPAGARGNDGAAGAA). Residues 157–169 (PPGPTGPAGPPGF) show a composition bias toward pro residues. Positions 203–253 (AGAAGPAGNPGADGQPGAKGANGAPGIAGAPGFPGARGPSGPQGPSGAPGP) are enriched in low complexity. K254 carries the post-translational modification 5-hydroxylysine. 4-hydroxyproline is present on residues P260, P263, P275, P284, P299, P305, P314, and P320. The span at 309–318 (GERGGPGSRG) shows a compositional bias: gly residues. The residue at position 329 (K329) is a 5-hydroxylysine. 24 positions are modified to 4-hydroxyproline: P338, P347, P353, P359, P368, P371, P380, P389, P395, P407, P416, P425, P428, P446, P468, P474, P480, P486, P492, P504, P513, P526, P532, and P541. Residues 362-388 (KGLTGSPGSPGPDGKTGPPGPAGQDGR) show a composition bias toward low complexity. Low complexity predominate over residues 397–416 (ARGQAGVMGFPGPKGAAGEP). Low complexity predominate over residues 458–483 (QGPAPGFQGLPGPAGPPGEAGKPGEQ). K553 carries the 5-hydroxylysine modification. 4-hydroxyproline occurs at positions 559, 574, and 580. Positions 586-600 (SGPSGPAGPTGARGA) are enriched in low complexity. S589 is modified (phosphoserine). 4-hydroxyproline occurs at positions 601, 607, 610, 619, 625, 643, 652, and 661. A compositionally biased stretch (low complexity) spans 613–640 (AGFAGPPGADGQPGAKGEPGDAGAKGDA). Residues 642–654 (PPGPAGPTGPPGP) show a composition bias toward pro residues. K664 is modified (5-hydroxylysine). A compositionally biased stretch (low complexity) spans 669–685 (SAGPPGATGFPGAAGRV). A 4-hydroxyproline mark is found at P673 and P679. The residue at position 687 (P687) is a 3-hydroxyproline. 16 positions are modified to 4-hydroxyproline: P688, P697, P700, P721, P730, P738, P747, P765, P774, P777, P783, P798, P804, P810, P819, and P825. Over residues 714–723 (ETGPAGRPGE) the composition is skewed to low complexity. Residues 735 to 747 (KGSPGADGPAGAP) show a composition bias toward low complexity. Over residues 797-807 (PPGPMGPPGLA) the composition is skewed to pro residues. Positions 809–824 (PPGESGREGSPGAEGS) are enriched in low complexity. K834 is modified (5-hydroxylysine). Over residues 843-858 (AGPPGAPGAPGAPGPV) the composition is skewed to pro residues. P846, P849, and P852 each carry 4-hydroxyproline. Residues 879 to 893 (AGPAGARGPAGPQGP) show a composition bias toward low complexity. The span at 894 to 905 (RGDKGETGEQGD) shows a compositional bias: basic and acidic residues. K897 carries the 5-hydroxylysine modification. 4-hydroxyproline occurs at positions 918, 921, 939, and 954. Low complexity predominate over residues 921–954 (PGEQGPSGASGPAGPRGPPGSAGSPGKDGLNGLP). Position 959 is a 3-hydroxyproline (P959). At P960 the chain carries 4-hydroxyproline. The segment covering 972–987 (VGPPGPPGPPGPPGPP) has biased composition (pro residues). 3-hydroxyproline is present on P974. Position 975 is a 4-hydroxyproline (P975). 3-hydroxyproline is present on P977. 4-hydroxyproline is present on P978. P980 is modified (3-hydroxyproline). A 4-hydroxyproline mark is found at P981, P984, and P987.

This sequence belongs to the fibrillar collagen family. As to quaternary structure, trimers of one alpha 2(I) and two alpha 1(I) chains. Post-translationally, contains mostly 4-hydroxyproline. Proline residues at the third position of the tripeptide repeating unit (G-X-Y) are hydroxylated in some or all of the chains. Contains 3-hydroxyproline at a few sites. This modification occurs on the first proline residue in the sequence motif Gly-Pro-Hyp, where Hyp is 4-hydroxyproline. In terms of processing, lysine residues at the third position of the tripeptide repeating unit (G-X-Y) are 5-hydroxylated in some or all of the chains. Post-translationally, O-glycosylated on hydroxylated lysine residues. The O-linked glycan consists of a Glc-Gal disaccharide. In terms of tissue distribution, expressed in bones.

Its subcellular location is the secreted. It localises to the extracellular space. The protein resides in the extracellular matrix. Its function is as follows. Type I collagen is a member of group I collagen (fibrillar forming collagen). The chain is Collagen alpha-1(I) chain from Glossotherium robustum (Ground sloth).